The sequence spans 580 residues: Acyl-coenzyme A synthetase ACSM4, mitochondrial (580 aa).

The N-terminal 22 residues, 1–22 (MKIFFRYQTFRFIWLTKPPGRR), are a transit peptide targeting the mitochondrion. ATP-binding positions include 229 to 237 (TSGTTGFPK), 368 to 373 (EGYGQT), Asp-455, Arg-470, and Lys-566.

It belongs to the ATP-dependent AMP-binding enzyme family. Mg(2+) is required as a cofactor. Requires Mn(2+) as cofactor.

Its subcellular location is the mitochondrion. It catalyses the reaction a medium-chain fatty acid + ATP + CoA = a medium-chain fatty acyl-CoA + AMP + diphosphate. The enzyme catalyses hexanoate + ATP + CoA = hexanoyl-CoA + AMP + diphosphate. The catalysed reaction is octanoate + ATP + CoA = octanoyl-CoA + AMP + diphosphate. It carries out the reaction decanoate + ATP + CoA = decanoyl-CoA + AMP + diphosphate. It catalyses the reaction dodecanoate + ATP + CoA = dodecanoyl-CoA + AMP + diphosphate. In terms of biological role, catalyzes the activation of fatty acids by CoA to produce an acyl-CoA, the first step in fatty acid metabolism. Capable of activating medium-chain fatty acids with a preference for C6-12 fatty acids. The protein is Acyl-coenzyme A synthetase ACSM4, mitochondrial (ACSM4) of Homo sapiens (Human).